Consider the following 459-residue polypeptide: NADP-specific glutamate dehydrogenase (459 aa).

The active site involves Lys-114.

The protein belongs to the Glu/Leu/Phe/Val dehydrogenases family. As to quaternary structure, homohexamer.

It carries out the reaction L-glutamate + NADP(+) + H2O = 2-oxoglutarate + NH4(+) + NADPH + H(+). In Emericella nidulans (strain FGSC A4 / ATCC 38163 / CBS 112.46 / NRRL 194 / M139) (Aspergillus nidulans), this protein is NADP-specific glutamate dehydrogenase (gdhA).